Here is a 621-residue protein sequence, read N- to C-terminus: DDB1- and CUL4-associated factor 10 homolog (621 aa).

4 WD repeats span residues 46 to 85 (GRTG…EIFK), 89 to 127 (AHTD…QKLR), 131 to 170 (GHSN…EQGL), and 176 to 215 (FHAS…TLHK). Disordered regions lie at residues 305–349 (VRSE…PRQA) and 437–483 (LMGS…TTVR). Ser307 is subject to Phosphoserine. Polar residues predominate over residues 324-342 (STTLASRSSLNESQDQDTV). The span at 454–478 (ESNQSSSSSSSSSSSSSSSSSSNNS) shows a compositional bias: low complexity. Residues Ser494 and Ser497 each carry the phosphoserine modification. The WD 5 repeat unit spans residues 588–621 (EHQDVVLCAKFSPREPLLVTGCNGGEVTWYRPNL).

It belongs to the WD repeat DCAF10 family.

In Drosophila melanogaster (Fruit fly), this protein is DDB1- and CUL4-associated factor 10 homolog.